The sequence spans 116 residues: Large ribosomal subunit protein uL24 (116 aa).

Positions 1 to 27 are disordered; that stretch reads MAGRKSSTPTRHKMHVKTGDTVQVISG.

The protein belongs to the universal ribosomal protein uL24 family. As to quaternary structure, part of the 50S ribosomal subunit.

Its function is as follows. One of two assembly initiator proteins, it binds directly to the 5'-end of the 23S rRNA, where it nucleates assembly of the 50S subunit. Functionally, one of the proteins that surrounds the polypeptide exit tunnel on the outside of the subunit. This is Large ribosomal subunit protein uL24 from Picosynechococcus sp. (strain ATCC 27264 / PCC 7002 / PR-6) (Agmenellum quadruplicatum).